A 614-amino-acid polypeptide reads, in one-letter code: Kelch-like protein 40 (614 aa).

A BTB domain is found at 33–100 (IDCVLKIQGK…IYTSEIEITE (68 aa)). The region spanning 135–237 (CLAIFRLGLL…PQDYIKNKVE (103 aa)) is the BACK domain. 5 Kelch repeats span residues 353-405 (QLFV…ESDN), 406-455 (SIYL…SHDN), 456-503 (LVYV…VHKG), 505-550 (ILIA…SMNG), and 552-606 (LYAI…AARL).

This sequence belongs to the KLHL40 family. Component of the BCR(KLHL40) E3 ubiquitin ligase complex.

The protein localises to the cytoplasm. It is found in the myofibril. The protein resides in the sarcomere. Its subcellular location is the a band. It localises to the i band. Substrate-specific adapter of a BCR (BTB-CUL3-RBX1) E3 ubiquitin ligase complex that acts as a key regulator of skeletal muscle development. In Xenopus tropicalis (Western clawed frog), this protein is Kelch-like protein 40 (klhl40).